The chain runs to 258 residues: Small ribosomal subunit protein uS2 (258 aa).

The disordered stretch occupies residues 234 to 258; that stretch reads ETANAEEAMQKAAAVEAAAEAAPAQ. Residues 236-258 show a composition bias toward low complexity; the sequence is ANAEEAMQKAAAVEAAAEAAPAQ.

This sequence belongs to the universal ribosomal protein uS2 family.

The polypeptide is Small ribosomal subunit protein uS2 (Desulfovibrio desulfuricans (strain ATCC 27774 / DSM 6949 / MB)).